Consider the following 222-residue polypeptide: Large ribosomal subunit protein uL4 (222 aa).

The protein belongs to the universal ribosomal protein uL4 family. As to quaternary structure, part of the 50S ribosomal subunit.

One of the primary rRNA binding proteins, this protein initially binds near the 5'-end of the 23S rRNA. It is important during the early stages of 50S assembly. It makes multiple contacts with different domains of the 23S rRNA in the assembled 50S subunit and ribosome. Functionally, forms part of the polypeptide exit tunnel. In Chlamydia trachomatis serovar L2 (strain ATCC VR-902B / DSM 19102 / 434/Bu), this protein is Large ribosomal subunit protein uL4.